Here is a 429-residue protein sequence, read N- to C-terminus: Probable M18 family aminopeptidase 2 (429 aa).

Residues histidine 82, histidine 156, and histidine 401 each contribute to the Zn(2+) site.

Belongs to the peptidase M18 family. Requires Zn(2+) as cofactor.

The polypeptide is Probable M18 family aminopeptidase 2 (Pseudomonas putida (strain ATCC 700007 / DSM 6899 / JCM 31910 / BCRC 17059 / LMG 24140 / F1)).